A 266-amino-acid polypeptide reads, in one-letter code: Glioma pathogenesis-related protein 1 (266 aa).

The first 21 residues, 1–21, serve as a signal peptide directing secretion; that stretch reads MRVTLATIAWMVSFVSNYSHT. Residues 38–175 enclose the SCP domain; it reads VRIHNKFRSE…SNGAHFICNY (138 aa). Residues 233–255 traverse the membrane as a helical segment; sequence YTSLFLIVNSVILILSVIITILV.

Belongs to the CRISP family. In terms of tissue distribution, according to PubMed:8973356, it is ubiquitously expressed with high levels in lung and kidney and low levels in heart and liver. Highly expressed in cell lines derived from nervous system tumors arising from glia, low or absent in non-glial-derived nervous system tumor cell lines. Also found in fetal kidney. According to PubMed:7607567 it is expressed only in brain tumor glioblastoma multiforme/astrocytoma and not in other nervous system tumors or normal fetal or adult tissues.

It localises to the membrane. This Homo sapiens (Human) protein is Glioma pathogenesis-related protein 1 (GLIPR1).